The primary structure comprises 674 residues: MHHLLEQSADMATALLAGEKLRELILPGSQDDKAGALAALLLQLKLELPFDRVVTIGTVLVPILLVTLVFTKNFAEEPIYCYTPHNFTRDQALYARGYCWTELRDALPGVDASLWPSLFEHKFLPYALLAFAAIMYVPALGWEFLASTRLTSELNFLLQEIDNCYHRAAEGRAPKIEKQIQSKGPGITEREKREIIENAEKEKSPEQNLFEKYLERRGRSNFLAKLYLARHVLILLLSVVPISYLCTYYATQKQNEFTCALGASPDGPVGSAGPTVRVSCKLPSVQLQRIIAGVDIVLLCFMNLIILVNLIHLFIFRKSNFIFDKLHKVGIKTRRQWRRSQFCDINILAMFCNENRDHIKSLNRLDFITNESDLMYDNVVRQLLAALAQSNHDTTPTVRDSGIQTVDPSINPAEPEGSAEPPVVKRPRKKMKWIPTSNPLPQPFKEQLAIMRVENSKTEKPKPVRRKTATDTLIAPLLDAGARAAHHYKGSGGDTGPSSAPPAASEKKHTRHFSLDVHPYILGSKKAKTEAVPPALPASRSQEGGFLSQTEECGLGLAAAPTKDAPLPEKEIPYPTESALPSGGPFHVCSPPTASAAASLSPSSLGKADPLTILSRNATHPLLHISTLYEAREEEEGGPCAPSDMGDLLSIPPPQQILIATFEEPRTVVSTVEF.

Over 11 to 53 the chain is Cytoplasmic; sequence MATALLAGEKLRELILPGSQDDKAGALAALLLQLKLELPFDRV. The helical transmembrane segment at 54–74 threads the bilayer; the sequence is VTIGTVLVPILLVTLVFTKNF. At 75-125 the chain is on the extracellular side; it reads AEEPIYCYTPHNFTRDQALYARGYCWTELRDALPGVDASLWPSLFEHKFLP. N-linked (GlcNAc...) asparagine glycosylation occurs at asparagine 86. Residues 126 to 146 form a helical membrane-spanning segment; the sequence is YALLAFAAIMYVPALGWEFLA. At 147-230 the chain is on the cytoplasmic side; that stretch reads STRLTSELNF…NFLAKLYLAR (84 aa). Residues 231–251 traverse the membrane as a helical segment; sequence HVLILLLSVVPISYLCTYYAT. At 252-295 the chain is on the extracellular side; sequence QKQNEFTCALGASPDGPVGSAGPTVRVSCKLPSVQLQRIIAGVD. A helical transmembrane segment spans residues 296-316; sequence IVLLCFMNLIILVNLIHLFIF. The Cytoplasmic portion of the chain corresponds to 317–674; the sequence is RKSNFIFDKL…PRTVVSTVEF (358 aa). Residues 394–408 show a composition bias toward polar residues; the sequence is TTPTVRDSGIQTVDP. 2 disordered regions span residues 394–426 and 485–510; these read TTPT…VVKR and AHHY…KKHT. Phosphoserine is present on residues serine 590 and serine 601.

It belongs to the pannexin family. In terms of assembly, forms PANX1/PANX2-heteromeric intercellular channels on coexpression in paired Xenopus oocytes. Does not form homomeric channels. Post-translationally, S-palmitoylated in neural stem and progenitor cells. Cleaved by CASP3 and CASP7 during apoptosis. Cleavage has no effect on it function. As to expression, expressed in the eye, thyroid, prostate, kidney and liver. Abundantly expressed in the CNS, including hippocampus, olfactory bulb, cortex, cerebellum. Not detected in the white matter.

Its subcellular location is the cell membrane. It is found in the golgi apparatus membrane. The protein resides in the endoplasmic reticulum membrane. Functionally, structural component of the gap junctions and the hemichannels. This Rattus norvegicus (Rat) protein is Pannexin-2 (Panx2).